Consider the following 263-residue polypeptide: 3-methyl-2-oxobutanoate hydroxymethyltransferase (263 aa).

The Mg(2+) site is built by Asp-45 and Asp-84. 3-methyl-2-oxobutanoate contacts are provided by residues 45 to 46 (DS), Asp-84, and Lys-112. Glu-114 is a Mg(2+) binding site. The active-site Proton acceptor is Glu-180.

This sequence belongs to the PanB family. Homodecamer; pentamer of dimers. Requires Mg(2+) as cofactor.

It localises to the cytoplasm. The catalysed reaction is 3-methyl-2-oxobutanoate + (6R)-5,10-methylene-5,6,7,8-tetrahydrofolate + H2O = 2-dehydropantoate + (6S)-5,6,7,8-tetrahydrofolate. Its pathway is cofactor biosynthesis; (R)-pantothenate biosynthesis; (R)-pantoate from 3-methyl-2-oxobutanoate: step 1/2. Catalyzes the reversible reaction in which hydroxymethyl group from 5,10-methylenetetrahydrofolate is transferred onto alpha-ketoisovalerate to form ketopantoate. The protein is 3-methyl-2-oxobutanoate hydroxymethyltransferase of Citrobacter koseri (strain ATCC BAA-895 / CDC 4225-83 / SGSC4696).